Consider the following 545-residue polypeptide: CTP synthase (545 aa).

The amidoligase domain stretch occupies residues 1–266; the sequence is MTTNYIFVTG…DDYICKRFSL (266 aa). A CTP-binding site is contributed by S14. S14 contributes to the UTP binding site. ATP contacts are provided by residues 15-20 and D72; that span reads SLGKGI. 2 residues coordinate Mg(2+): D72 and E140. CTP-binding positions include 147-149, 187-192, and K223; these read DIE and KTKPTQ. Residues 187–192 and K223 contribute to the UTP site; that span reads KTKPTQ. 239-241 provides a ligand contact to ATP; that stretch reads KDV. The Glutamine amidotransferase type-1 domain maps to 291–542; that stretch reads TIGMVGKYIE…VKAASEHQKR (252 aa). Residue G352 coordinates L-glutamine. C379 acts as the Nucleophile; for glutamine hydrolysis in catalysis. L-glutamine contacts are provided by residues 380–383, E403, and R470; that span reads LGMQ. Catalysis depends on residues H515 and E517.

It belongs to the CTP synthase family. In terms of assembly, homotetramer.

The enzyme catalyses UTP + L-glutamine + ATP + H2O = CTP + L-glutamate + ADP + phosphate + 2 H(+). It carries out the reaction L-glutamine + H2O = L-glutamate + NH4(+). It catalyses the reaction UTP + NH4(+) + ATP = CTP + ADP + phosphate + 2 H(+). It functions in the pathway pyrimidine metabolism; CTP biosynthesis via de novo pathway; CTP from UDP: step 2/2. Allosterically activated by GTP, when glutamine is the substrate; GTP has no effect on the reaction when ammonia is the substrate. The allosteric effector GTP functions by stabilizing the protein conformation that binds the tetrahedral intermediate(s) formed during glutamine hydrolysis. Inhibited by the product CTP, via allosteric rather than competitive inhibition. Functionally, catalyzes the ATP-dependent amination of UTP to CTP with either L-glutamine or ammonia as the source of nitrogen. Regulates intracellular CTP levels through interactions with the four ribonucleotide triphosphates. This chain is CTP synthase, found in Salmonella schwarzengrund (strain CVM19633).